The sequence spans 274 residues: Probable endonuclease LCL3 (274 aa).

A helical membrane pass occupies residues 15–32; the sequence is AVLSIILTGSTLTLIYTY. Residues 53–261 form the TNase-like domain; sequence HWLYGKVTSV…RSRKKGLWIQ (209 aa). Residue R151 is part of the active site. Residue D156 coordinates Ca(2+). Active-site residues include E159 and R199.

Belongs to the LCL3 family.

It is found in the mitochondrion. Its subcellular location is the membrane. The polypeptide is Probable endonuclease LCL3 (LCL3) (Saccharomyces cerevisiae (strain Lalvin EC1118 / Prise de mousse) (Baker's yeast)).